The primary structure comprises 240 residues: Proteasome subunit alpha (240 aa).

This sequence belongs to the peptidase T1A family. The 20S proteasome core is composed of 14 alpha and 14 beta subunits that assemble into four stacked heptameric rings, resulting in a barrel-shaped structure. The two inner rings, each composed of seven catalytic beta subunits, are sandwiched by two outer rings, each composed of seven alpha subunits. The catalytic chamber with the active sites is on the inside of the barrel. Has a gated structure, the ends of the cylinder being occluded by the N-termini of the alpha-subunits. Is capped at one or both ends by the proteasome regulatory ATPase, PAN.

It localises to the cytoplasm. The formation of the proteasomal ATPase PAN-20S proteasome complex, via the docking of the C-termini of PAN into the intersubunit pockets in the alpha-rings, triggers opening of the gate for substrate entry. Interconversion between the open-gate and close-gate conformations leads to a dynamic regulation of the 20S proteasome proteolysis activity. Functionally, component of the proteasome core, a large protease complex with broad specificity involved in protein degradation. The protein is Proteasome subunit alpha of Methanoculleus marisnigri (strain ATCC 35101 / DSM 1498 / JR1).